We begin with the raw amino-acid sequence, 172 residues long: Large ribosomal subunit protein uL10 (172 aa).

Belongs to the universal ribosomal protein uL10 family. In terms of assembly, part of the ribosomal stalk of the 50S ribosomal subunit. The N-terminus interacts with L11 and the large rRNA to form the base of the stalk. The C-terminus forms an elongated spine to which 3 L12 dimers bind in a sequential fashion forming a heptameric L10(L12)2(L12)2(L12)2 complex.

Forms part of the ribosomal stalk, playing a central role in the interaction of the ribosome with GTP-bound translation factors. This chain is Large ribosomal subunit protein uL10, found in Agrobacterium fabrum (strain C58 / ATCC 33970) (Agrobacterium tumefaciens (strain C58)).